Consider the following 328-residue polypeptide: tRNA uridine(34) hydroxylase (328 aa).

The Rhodanese domain maps to 130-224 (LDKDTVVLDT…YGKDPEVQGE (95 aa)). The active-site Cysteine persulfide intermediate is the C184.

The protein belongs to the TrhO family.

It catalyses the reaction uridine(34) in tRNA + AH2 + O2 = 5-hydroxyuridine(34) in tRNA + A + H2O. Catalyzes oxygen-dependent 5-hydroxyuridine (ho5U) modification at position 34 in tRNAs. This chain is tRNA uridine(34) hydroxylase, found in Streptococcus pneumoniae (strain Taiwan19F-14).